We begin with the raw amino-acid sequence, 235 residues long: MKFSAPVLAIFLASASAQSTAELAAQIPSCAQTCLATAITGAGCTAGDYACQCGTSQNTITASATPCVISACTSEEALNTQRTTSQICALVAAGSASSPSASSSASASASSSASSTSGAASASASASSSASSASAAASALTLAHPIPNPSHPPSPTIQTNLRKKVRNSNRLTPASLSSVSSALVSSASSVRASASSAVSAATTAANPAATTAAGVKEEASFFIPAAVALFAVFAV.

Positions 1-17 (MKFSAPVLAIFLASASA) are cleaved as a signal peptide. The 97-residue stretch at 18–114 (QSTAELAAQI…ASASASSSAS (97 aa)) folds into the CFEM domain. Intrachain disulfides connect C30–C72, C34–C67, C44–C51, and C53–C88. D48 provides a ligand contact to heme. T211 is lipidated: GPI-anchor amidated threonine. Positions 212–235 (AAGVKEEASFFIPAAVALFAVFAV) are cleaved as a propeptide — removed in mature form.

The protein belongs to the RBT5 family.

The protein resides in the cell membrane. The protein localises to the secreted. It is found in the host cytoplasm. It localises to the host nucleus. Its subcellular location is the host cell membrane. In terms of biological role, appears to function during host infection, and may play a role in suppressing the host immune response. The chain is Effector CFEM1 from Marssonina brunnea f. sp. multigermtubi (strain MB_m1) (Marssonina leaf spot fungus).